Here is a 454-residue protein sequence, read N- to C-terminus: Phosphoglucosamine mutase (454 aa).

Serine 101 acts as the Phosphoserine intermediate in catalysis. 4 residues coordinate Mg(2+): serine 101, aspartate 243, aspartate 245, and aspartate 247. Serine 101 carries the post-translational modification Phosphoserine.

Belongs to the phosphohexose mutase family. Mg(2+) is required as a cofactor. In terms of processing, activated by phosphorylation.

It catalyses the reaction alpha-D-glucosamine 1-phosphate = D-glucosamine 6-phosphate. Its function is as follows. Catalyzes the conversion of glucosamine-6-phosphate to glucosamine-1-phosphate. The polypeptide is Phosphoglucosamine mutase (Geotalea uraniireducens (strain Rf4) (Geobacter uraniireducens)).